The following is a 344-amino-acid chain: MSMSGLPFDDFRALLRELPGPDTHALVAAKERNAQLTKPAGSLGRLEEIAMWLAAWSGRSPAVTRPLVAIFAGNHGVTRHGVTPYPTSVTQQMVENFAAGGAAINQICVANDLGLKIFDLALDYPTGDITCEPALSERDCAATMAFGMEAIAGGTDLLCVGEMGIGNTTIAAAINLALYGGTAEEWTGPGTGSEGEVMARKIAAVKAAVEFHKDHLSDPLEIMRRLGGREIAAIAGAILAARVQRIPVLIDGYVATAAAALLKAANSSALDHCLIGHVSGEPGHLAAVEKLGKTPLLALGMRLGEGTGAALAAGIVKAAAACHSGMATFEAAGVDTRISPRTEH.

The active-site Proton acceptor is Glu-305.

It belongs to the CobT family.

The enzyme catalyses 5,6-dimethylbenzimidazole + nicotinate beta-D-ribonucleotide = alpha-ribazole 5'-phosphate + nicotinate + H(+). Its pathway is nucleoside biosynthesis; alpha-ribazole biosynthesis; alpha-ribazole from 5,6-dimethylbenzimidazole: step 1/2. Catalyzes the synthesis of alpha-ribazole-5'-phosphate from nicotinate mononucleotide (NAMN) and 5,6-dimethylbenzimidazole (DMB). This chain is Nicotinate-nucleotide--dimethylbenzimidazole phosphoribosyltransferase, found in Agrobacterium fabrum (strain C58 / ATCC 33970) (Agrobacterium tumefaciens (strain C58)).